Reading from the N-terminus, the 476-residue chain is CBL-interacting protein kinase 30 (476 aa).

Residues 17-272 (YKLGRLLGRG…ISKIMDRPWF (256 aa)) enclose the Protein kinase domain. ATP is bound by residues 23–31 (LGRGTFAKV) and Lys46. The active-site Proton acceptor is the Asp140. An activation loop region spans residues 158 to 187 (DFGLSALDGGLRGDGLLHTTCGTPAYVAPE). The tract at residues 296-315 (KEASQQHDDEEDDGFAREKK) is disordered. The NAF domain occupies 299–353 (SQQHDDEEDDGFAREKKKRSNVIMSSPVIDVRPSSMNAFDIISRSRGLDLSKMFD). The interval 358–387 (RSEARFSTRETTTAIVSKLEEIAEAGRFSF) is PPI.

This sequence belongs to the protein kinase superfamily. CAMK Ser/Thr protein kinase family. SNF1 subfamily. Requires Mn(2+) as cofactor.

The enzyme catalyses L-seryl-[protein] + ATP = O-phospho-L-seryl-[protein] + ADP + H(+). It carries out the reaction L-threonyl-[protein] + ATP = O-phospho-L-threonyl-[protein] + ADP + H(+). Its function is as follows. CIPK serine-threonine protein kinases interact with CBL proteins. Binding of a CBL protein to the regulatory NAF domain of CIPK protein lead to the activation of the kinase in a calcium-dependent manner. This chain is CBL-interacting protein kinase 30 (CIPK30), found in Oryza sativa subsp. japonica (Rice).